The primary structure comprises 190 residues: DNA dC-&gt;dU-editing enzyme APOBEC-3C (190 aa).

Residues 29–138 (DRNETWLCFT…PCYQEGLRSL (110 aa)) enclose the CMP/dCMP-type deaminase domain. Residues 40-86 (EGIKRRSVVSWKTGVFRNQVDSETHCHAERCFLSWFCDDILSPNTKY) are (Microbial infection) Required for interaction with human foamy virus protein Bet. Histidine 66 is a binding site for Zn(2+). The active-site Proton donor is glutamate 68. Cysteine 97 and cysteine 100 together coordinate Zn(2+).

It belongs to the cytidine and deoxycytidylate deaminase family. Homodimer. Interacts with TRIB3. Interacts with AGO2. As to quaternary structure, (Microbial infection) Interacts with human foamy virus protein Bet; this interaction does not induce APOBEC3C degradation but prevents its dimerization and incorporation into the virion by binding of Bet close to or within the APOBEC3C dimerization site. In terms of assembly, (Microbial infection) Interacts with HIV-1 Vif. Requires Zn(2+) as cofactor. Expressed in spleen, testes, peripherical blood lymphocytes, heart, thymus, prostate and ovary.

Its subcellular location is the nucleus. It localises to the cytoplasm. The catalysed reaction is a 2'-deoxycytidine in single-stranded DNA + H2O + H(+) = a 2'-deoxyuridine in single-stranded DNA + NH4(+). With respect to regulation, (Microbial infection) Antiviral activity is neutralized by the HIV-1 virion infectivity factor (Vif), that prevents its incorporation into progeny HIV-1 virions by both inhibiting its translation and/or by inducing its ubiquitination and subsequent degradation by the 26S proteasome. Functionally, DNA deaminase (cytidine deaminase) which acts as an inhibitor of retrovirus replication and retrotransposon mobility via deaminase-dependent and -independent mechanisms. After the penetration of retroviral nucleocapsids into target cells of infection and the initiation of reverse transcription, it can induce the conversion of cytosine to uracil in the minus-sense single-strand viral DNA, leading to G-to-A hypermutations in the subsequent plus-strand viral DNA. The resultant detrimental levels of mutations in the proviral genome, along with a deamination-independent mechanism that works prior to the proviral integration, together exert efficient antiretroviral effects in infected target cells. Selectively targets single-stranded DNA and does not deaminate double-stranded DNA or single- or double-stranded RNA. Exhibits antiviral activity against simian immunodeficiency virus (SIV), hepatitis B virus (HBV), herpes simplex virus 1 (HHV-1) and Epstein-Barr virus (EBV) and may inhibit the mobility of LTR and non-LTR retrotransposons. May also play a role in the epigenetic regulation of gene expression through the process of active DNA demethylation. The polypeptide is DNA dC-&gt;dU-editing enzyme APOBEC-3C (APOBEC3C) (Homo sapiens (Human)).